We begin with the raw amino-acid sequence, 168 residues long: G/U mismatch-specific DNA glycosylase (168 aa).

This sequence belongs to the uracil-DNA glycosylase (UDG) superfamily. TDG/mug family. As to quaternary structure, binds DNA as a monomer.

It localises to the cytoplasm. It catalyses the reaction Specifically hydrolyzes mismatched double-stranded DNA and polynucleotides, releasing free uracil.. Its function is as follows. Excises ethenocytosine and uracil, which can arise by alkylation or deamination of cytosine, respectively, from the corresponding mispairs with guanine in ds-DNA. It is capable of hydrolyzing the carbon-nitrogen bond between the sugar-phosphate backbone of the DNA and the mispaired base. The complementary strand guanine functions in substrate recognition. Required for DNA damage lesion repair in stationary-phase cells. The protein is G/U mismatch-specific DNA glycosylase of Klebsiella pneumoniae (strain 342).